Here is a 284-residue protein sequence, read N- to C-terminus: MKLVIVSGRSGSGKSVALRVLEDLGYYCVDNLPLPLIGTLLEQLKGSNDLVAISVDVRNLPEQDKVLVKQLASLPPDTELTSFFLNSSDKILLKRYSETRRLHPLSKSQVSLQEAIKLEGKLLEPMSKLVDHYIDTSNLNIYDLSDQVRQILLGSVDKELVINFESFGFKHGMPTEADFMFDVRFLPNPHWELALRPLTGLDEPVAEFLNRQPLVNKFIWQIENLLETWLPHLERNNRSYLTVAIGCTGGQHRSVYVAEQLAKRFSNGKHKVYARHRELNNAKA.

8–15 (GRSGSGKS) lines the ATP pocket. Residue 56 to 59 (DVRN) coordinates GTP.

The protein belongs to the RapZ-like family.

In terms of biological role, displays ATPase and GTPase activities. In Shewanella baltica (strain OS195), this protein is Nucleotide-binding protein Sbal195_0713.